Consider the following 106-residue polypeptide: DNA-directed RNA polymerase subunit Rpo6 (106 aa).

This sequence belongs to the archaeal Rpo6/eukaryotic RPB6 RNA polymerase subunit family. As to quaternary structure, part of the RNA polymerase complex.

The protein resides in the cytoplasm. The enzyme catalyses RNA(n) + a ribonucleoside 5'-triphosphate = RNA(n+1) + diphosphate. In terms of biological role, DNA-dependent RNA polymerase (RNAP) catalyzes the transcription of DNA into RNA using the four ribonucleoside triphosphates as substrates. This chain is DNA-directed RNA polymerase subunit Rpo6, found in Pyrobaculum aerophilum (strain ATCC 51768 / DSM 7523 / JCM 9630 / CIP 104966 / NBRC 100827 / IM2).